A 227-amino-acid chain; its full sequence is DNA mismatch repair protein MutH (227 aa).

This sequence belongs to the MutH family.

Its subcellular location is the cytoplasm. Functionally, sequence-specific endonuclease that cleaves unmethylated GATC sequences. It is involved in DNA mismatch repair. This chain is DNA mismatch repair protein MutH, found in Vibrio vulnificus (strain CMCP6).